Reading from the N-terminus, the 328-residue chain is Ankyrin repeat domain-containing protein 2 (328 aa).

At Ser36 the chain carries Phosphoserine. A Phosphoserine; by PKB/AKT2 modification is found at Ser68. The segment at 96–116 (RDALAAAQEPPPEPEEITGPV) is disordered. 5 ANK repeats span residues 116-145 (VNEE…SADT), 149-178 (FRRT…TVDF), 182-211 (LDCT…DTNV), 215-244 (LLST…DINA), and 248-277 (EGDS…DMMA). Residues 297–328 (RHALEHPEPESEQNGLERPGSGRETPQPIPAQ) form a disordered region.

As to quaternary structure, interacts with ID3; both proteins cooperate in myoblast differentiation. Interacts with TTN/titin. Interacts (via ANK repeats) with TCAP; the interaction is direct. Interacts with TJP1 (via PDZ domains). Interacts with PML; the interaction is direct. Interacts with p53/TP53. Interacts with YBX1. Interacts with AKT2. In terms of processing, phosphorylation at Ser-68 by PKB/AKT2 in response to oxidative stress induces translocation to the nucleus and negatively regulates myoblast differentiation. In terms of tissue distribution, expressed by myoblasts (at protein level). Expressed in skeletal and cardiac muscles.

It is found in the cytoplasm. The protein resides in the myofibril. The protein localises to the sarcomere. Its subcellular location is the i band. It localises to the cytosol. It is found in the nucleus. The protein resides in the PML body. Functionally, functions as a negative regulator of myocyte differentiation. May interact with both sarcoplasmic structural proteins and nuclear proteins to regulate gene expression during muscle development and in response to muscle stress. This Mus musculus (Mouse) protein is Ankyrin repeat domain-containing protein 2 (Ankrd2).